Consider the following 567-residue polypeptide: 2-isopropylmalate synthase (567 aa).

A Pyruvate carboxyltransferase domain is found at 28–302; the sequence is PQWCSVDLRD…NPELDFSDIN (275 aa). Mg(2+) contacts are provided by D37, H241, H243, and N277. The segment at 435 to 567 is regulatory domain; the sequence is IRTPLQLNYH…DMDTQEEDIA (133 aa).

The protein belongs to the alpha-IPM synthase/homocitrate synthase family. LeuA type 2 subfamily. Homodimer. The cofactor is Mg(2+).

It localises to the cytoplasm. The enzyme catalyses 3-methyl-2-oxobutanoate + acetyl-CoA + H2O = (2S)-2-isopropylmalate + CoA + H(+). It functions in the pathway amino-acid biosynthesis; L-leucine biosynthesis; L-leucine from 3-methyl-2-oxobutanoate: step 1/4. Catalyzes the condensation of the acetyl group of acetyl-CoA with 3-methyl-2-oxobutanoate (2-ketoisovalerate) to form 3-carboxy-3-hydroxy-4-methylpentanoate (2-isopropylmalate). The polypeptide is 2-isopropylmalate synthase (Acetoanaerobium sticklandii (strain ATCC 12662 / DSM 519 / JCM 1433 / CCUG 9281 / NCIMB 10654 / HF) (Clostridium sticklandii)).